We begin with the raw amino-acid sequence, 273 residues long: Formamidopyrimidine-DNA glycosylase (273 aa).

The Schiff-base intermediate with DNA role is filled by P2. Residue E3 is the Proton donor of the active site. K59 functions as the Proton donor; for beta-elimination activity in the catalytic mechanism. Residues H92 and R111 each contribute to the DNA site. An FPG-type zinc finger spans residues K239–K273. The active-site Proton donor; for delta-elimination activity is the R263.

Belongs to the FPG family. Monomer. Requires Zn(2+) as cofactor.

It carries out the reaction Hydrolysis of DNA containing ring-opened 7-methylguanine residues, releasing 2,6-diamino-4-hydroxy-5-(N-methyl)formamidopyrimidine.. The enzyme catalyses 2'-deoxyribonucleotide-(2'-deoxyribose 5'-phosphate)-2'-deoxyribonucleotide-DNA = a 3'-end 2'-deoxyribonucleotide-(2,3-dehydro-2,3-deoxyribose 5'-phosphate)-DNA + a 5'-end 5'-phospho-2'-deoxyribonucleoside-DNA + H(+). Functionally, involved in base excision repair of DNA damaged by oxidation or by mutagenic agents. Acts as a DNA glycosylase that recognizes and removes damaged bases. Has a preference for oxidized purines, such as 7,8-dihydro-8-oxoguanine (8-oxoG). Has AP (apurinic/apyrimidinic) lyase activity and introduces nicks in the DNA strand. Cleaves the DNA backbone by beta-delta elimination to generate a single-strand break at the site of the removed base with both 3'- and 5'-phosphates. This chain is Formamidopyrimidine-DNA glycosylase, found in Listeria monocytogenes serotype 4b (strain F2365).